Here is a 102-residue protein sequence, read N- to C-terminus: Small ribosomal subunit protein uS10 (102 aa).

A disordered region spans residues 34–61 (MAGPIPLPTKTLKVTTRKSTDGEGSSSF).

The protein belongs to the universal ribosomal protein uS10 family. Part of the 30S ribosomal subunit.

In terms of biological role, involved in the binding of tRNA to the ribosomes. This Methanococcus aeolicus (strain ATCC BAA-1280 / DSM 17508 / OCM 812 / Nankai-3) protein is Small ribosomal subunit protein uS10.